The chain runs to 233 residues: MKSLLGTKVGMTQVFTETGKAVAATVIYVEPNKVLAVKTNEKDGYSAIQIGYETVKEKALNKPLLGQFKKANSDPKRHIKEFRDVVAEVGAELTVSEFEPGQLVNAQAYTKGHGFTGSIKRHNFSMGPMGHGAGYPHRYVGSIAKGRGGSQAQRVFKGTKLPGHYGHELVTTKNLLVLDVKANENLILIKGAIPGPKGSIVLLKSAKKVGHIVSDPQVVNYLANKASSSEANE.

Belongs to the universal ribosomal protein uL3 family. In terms of assembly, part of the 50S ribosomal subunit. Forms a cluster with proteins L14 and L19.

In terms of biological role, one of the primary rRNA binding proteins, it binds directly near the 3'-end of the 23S rRNA, where it nucleates assembly of the 50S subunit. The polypeptide is Large ribosomal subunit protein uL3 (Ureaplasma parvum serovar 3 (strain ATCC 27815 / 27 / NCTC 11736)).